The primary structure comprises 229 residues: Urease accessory protein UreG (229 aa).

The span at 1–15 shows a compositional bias: basic and acidic residues; it reads MPPHFIDGEPHDHQH. The interval 1-20 is disordered; sequence MPPHFIDGEPHDHQHDRPRR. Residue 34–41 participates in GTP binding; the sequence is GPVGSGKT.

The protein belongs to the SIMIBI class G3E GTPase family. UreG subfamily. As to quaternary structure, homodimer. UreD, UreF and UreG form a complex that acts as a GTP-hydrolysis-dependent molecular chaperone, activating the urease apoprotein by helping to assemble the nickel containing metallocenter of UreC. The UreE protein probably delivers the nickel.

It is found in the cytoplasm. Facilitates the functional incorporation of the urease nickel metallocenter. This process requires GTP hydrolysis, probably effectuated by UreG. This chain is Urease accessory protein UreG, found in Rhodococcus jostii (strain RHA1).